The chain runs to 42 residues: Large ribosomal subunit protein bL36 (42 aa).

This sequence belongs to the bacterial ribosomal protein bL36 family.

This chain is Large ribosomal subunit protein bL36, found in Wolbachia pipientis wMel.